The sequence spans 559 residues: Asparagine--tRNA ligase, cytoplasmic (559 aa).

A Phosphoserine modification is found at Ser-72. Positions 82-102 are disordered; that stretch reads HREQMKNDSREKKEAEDNLRR. N6-acetyllysine is present on Lys-255. Residue Ser-493 is modified to Phosphoserine. Position 501 is an N6-acetyllysine (Lys-501).

It belongs to the class-II aminoacyl-tRNA synthetase family. As to quaternary structure, homodimer.

The protein localises to the cytoplasm. It catalyses the reaction tRNA(Asn) + L-asparagine + ATP = L-asparaginyl-tRNA(Asn) + AMP + diphosphate + H(+). In terms of biological role, catalyzes the attachment of asparagine to tRNA(Asn) in a two-step reaction: asparagine is first activated by ATP to form Asn-AMP and then transferred to the acceptor end of tRNA(Asn). In addition to its essential role in protein synthesis, acts as a signaling molecule that induced migration of CCR3-expressing cells. Has an essential role in the development of the cerebral cortex, being required for proper proliferation of radial glial cells. This is Asparagine--tRNA ligase, cytoplasmic from Mus musculus (Mouse).